The primary structure comprises 450 residues: Phosphoglucosamine mutase (450 aa).

Catalysis depends on S102, which acts as the Phosphoserine intermediate. 4 residues coordinate Mg(2+): S102, D243, D245, and D247. Residue S102 is modified to Phosphoserine.

It belongs to the phosphohexose mutase family. The cofactor is Mg(2+). Post-translationally, activated by phosphorylation.

It catalyses the reaction alpha-D-glucosamine 1-phosphate = D-glucosamine 6-phosphate. Functionally, catalyzes the conversion of glucosamine-6-phosphate to glucosamine-1-phosphate. The sequence is that of Phosphoglucosamine mutase from Rhizobium etli (strain ATCC 51251 / DSM 11541 / JCM 21823 / NBRC 15573 / CFN 42).